Reading from the N-terminus, the 265-residue chain is 4-hydroxy-tetrahydrodipicolinate reductase (265 aa).

NAD(+) contacts are provided by residues 7–12 and Asp-33; that span reads GASGRM. NADP(+) is bound at residue Arg-34. Residues 96–98 and 120–123 each bind NAD(+); these read GTT and SANM. The Proton donor/acceptor role is filled by His-153. His-154 lines the (S)-2,3,4,5-tetrahydrodipicolinate pocket. The active-site Proton donor is the Lys-157. 163-164 serves as a coordination point for (S)-2,3,4,5-tetrahydrodipicolinate; sequence GT.

The protein belongs to the DapB family.

It localises to the cytoplasm. It catalyses the reaction (S)-2,3,4,5-tetrahydrodipicolinate + NAD(+) + H2O = (2S,4S)-4-hydroxy-2,3,4,5-tetrahydrodipicolinate + NADH + H(+). The catalysed reaction is (S)-2,3,4,5-tetrahydrodipicolinate + NADP(+) + H2O = (2S,4S)-4-hydroxy-2,3,4,5-tetrahydrodipicolinate + NADPH + H(+). It participates in amino-acid biosynthesis; L-lysine biosynthesis via DAP pathway; (S)-tetrahydrodipicolinate from L-aspartate: step 4/4. In terms of biological role, catalyzes the conversion of 4-hydroxy-tetrahydrodipicolinate (HTPA) to tetrahydrodipicolinate. The polypeptide is 4-hydroxy-tetrahydrodipicolinate reductase (Burkholderia pseudomallei (strain 1106a)).